A 104-amino-acid chain; its full sequence is Ribonucleotide reductase inhibitor protein SML1 (104 aa).

An N-acetylmethionine modification is found at methionine 1. The disordered stretch occupies residues 43-62 (PMLSTQNSMGSSASASASSL). 3 positions are modified to phosphoserine; by DUN1: serine 56, serine 58, and serine 60.

As to quaternary structure, homodimer; disulfide-linked. Interacts with RNR1. In terms of processing, phosphorylated by DUN1, a downstream effector of the Mec1/Rad53 checkpoint pathway, in response to DNA damage. This promotes ubiquitination of SML1 and targets it for degradation by the 26S proteasome.

It is found in the nucleus. The protein localises to the cytoplasm. In terms of biological role, strong inhibitor of ribonucleotide reductase (RNR1) and is involved in regulating dNTP production. This is Ribonucleotide reductase inhibitor protein SML1 (SML1) from Saccharomyces cerevisiae (strain ATCC 204508 / S288c) (Baker's yeast).